Reading from the N-terminus, the 621-residue chain is DnaJ homolog subfamily C member 2 (621 aa).

The residue at position 1 (Met1) is an N-acetylmethionine. Phosphoserine occurs at positions 47, 49, 60, and 63. In terms of domain architecture, J spans 88–161 (DHYAVLGLGH…VKRRAFNSVD (74 aa)). The tract at residues 160–250 (VDPTFDNSVP…RDERRWIEKQ (91 aa)) is ZRF1-UBD. At Ser183 the chain carries Phosphoserine. Disordered regions lie at residues 294-315 (EKKAKAEAKRKEQEAKEKQRQA) and 427-453 (EEAEAHMRQASKNTEKSAGGGGNGSKN). 2 SANT domains span residues 449-511 (NGSK…KLDP) and 549-604 (TDFT…EMVK).

Component of ribosome-associated complex (RAC), a heterodimer composed of Hsp70/DnaK-type chaperone HSPA14 and Hsp40/DnaJ-type chaperone DNAJC2. Interacts (via ZRF1-UBD region) with ID1. Phosphorylated in M (mitotic) phase.

The protein localises to the nucleus. It is found in the cytoplasm. It localises to the cytosol. In terms of biological role, acts both as a chaperone in the cytosol and as a chromatin regulator in the nucleus. When cytosolic, acts as a molecular chaperone: component of the ribosome-associated complex (RAC), a complex involved in folding or maintaining nascent polypeptides in a folding-competent state. In the RAC complex, stimulates the ATPase activity of the ribosome-associated pool of Hsp70-type chaperones HSPA14 that bind to the nascent polypeptide chain. When nuclear, mediates the switching from polycomb-repressed genes to an active state: specifically recruited at histone H2A ubiquitinated at 'Lys-119' (H2AK119ub), and promotes the displacement of the polycomb PRC1 complex from chromatin, thereby facilitating transcription activation. This chain is DnaJ homolog subfamily C member 2 (DNAJC2), found in Macaca fascicularis (Crab-eating macaque).